Here is a 109-residue protein sequence, read N- to C-terminus: Flagellar hook-basal body complex protein FliE (109 aa).

It belongs to the FliE family.

Its subcellular location is the bacterial flagellum basal body. The polypeptide is Flagellar hook-basal body complex protein FliE (Stutzerimonas stutzeri (strain A1501) (Pseudomonas stutzeri)).